The following is a 421-amino-acid chain: ATP-dependent RNA helicase RhlB (421 aa).

A Q motif motif is present at residues 9-37; sequence QKFSDFALHPAVIEALEKKGFHNCTPIQA. In terms of domain architecture, Helicase ATP-binding spans 40–219; that stretch reads LPLTLEGRDV…FEQMNNAEYV (180 aa). Residue 53 to 60 coordinates ATP; the sequence is AQTGTGKT. Positions 165 to 168 match the DEAD box motif; that stretch reads DEAD. Positions 245 to 390 constitute a Helicase C-terminal domain; sequence RLLQTLLEEE…VSKYNPDALM (146 aa). Residues 396 to 421 are disordered; the sequence is PLRLTRARPGNGPRRNGPPRNRRRSG. A compositionally biased stretch (low complexity) spans 403–414; that stretch reads RPGNGPRRNGPP.

This sequence belongs to the DEAD box helicase family. RhlB subfamily. In terms of assembly, component of the RNA degradosome, which is a multiprotein complex involved in RNA processing and mRNA degradation.

Its subcellular location is the cytoplasm. It catalyses the reaction ATP + H2O = ADP + phosphate + H(+). In terms of biological role, DEAD-box RNA helicase involved in RNA degradation. Has RNA-dependent ATPase activity and unwinds double-stranded RNA. This Klebsiella pneumoniae (strain 342) protein is ATP-dependent RNA helicase RhlB.